A 185-amino-acid polypeptide reads, in one-letter code: HTH-type transcriptional regulator Hpr (185 aa).

Positions 13 to 157 (AMIFSQRIAQ…LIAILRNIYG (145 aa)) constitute an HTH marR-type domain. A DNA-binding region (H-T-H motif) is located at residues 63–86 (ISEIAKFGVMHVSTAFNFSKKLEE).

Homodimer.

In terms of biological role, negative regulator of protease production and sporulation. This chain is HTH-type transcriptional regulator Hpr, found in Bacillus anthracis (strain CDC 684 / NRRL 3495).